The following is a 145-amino-acid chain: Transcription antitermination protein NusB (145 aa).

It belongs to the NusB family.

In terms of biological role, involved in transcription antitermination. Required for transcription of ribosomal RNA (rRNA) genes. Binds specifically to the boxA antiterminator sequence of the ribosomal RNA (rrn) operons. This is Transcription antitermination protein NusB from Acidothermus cellulolyticus (strain ATCC 43068 / DSM 8971 / 11B).